Here is a 616-residue protein sequence, read N- to C-terminus: Elongation factor 4 (616 aa).

Residues 17-203 (ERIRNFCIIA…RVCELVPAPV (187 aa)) enclose the tr-type G domain. Residues 29–34 (DHGKST) and 150–153 (NKID) contribute to the GTP site.

This sequence belongs to the TRAFAC class translation factor GTPase superfamily. Classic translation factor GTPase family. LepA subfamily.

The protein localises to the cell membrane. The enzyme catalyses GTP + H2O = GDP + phosphate + H(+). Functionally, required for accurate and efficient protein synthesis under certain stress conditions. May act as a fidelity factor of the translation reaction, by catalyzing a one-codon backward translocation of tRNAs on improperly translocated ribosomes. Back-translocation proceeds from a post-translocation (POST) complex to a pre-translocation (PRE) complex, thus giving elongation factor G a second chance to translocate the tRNAs correctly. Binds to ribosomes in a GTP-dependent manner. The sequence is that of Elongation factor 4 from Corynebacterium jeikeium (strain K411).